Reading from the N-terminus, the 37-residue chain is Large ribosomal subunit protein bL36c (37 aa).

The protein belongs to the bacterial ribosomal protein bL36 family.

Its subcellular location is the plastid. The protein resides in the chloroplast. The chain is Large ribosomal subunit protein bL36c (rpl36) from Euglena gracilis.